A 175-amino-acid chain; its full sequence is NADH-ubiquinone oxidoreductase chain 6 (175 aa).

The next 6 helical transmembrane spans lie at 1-21, 24-44, 51-71, 87-107, 112-132, and 148-168; these read MMYIVFIMSVLYVVGFIGFSS, SPVYGGMSLVVSGGLGCGIIM, LGLVVFLVYLGGMMVVFGYTI, VVLSAFLVGLLMEVFMVVWLF, ELVGFYFGGLESFVTLGEGGF, and CGFWFLAMAGWMLFVSIFIAT.

It belongs to the complex I subunit 6 family. Core subunit of respiratory chain NADH dehydrogenase (Complex I) which is composed of 45 different subunits.

The protein resides in the mitochondrion inner membrane. It carries out the reaction a ubiquinone + NADH + 5 H(+)(in) = a ubiquinol + NAD(+) + 4 H(+)(out). Functionally, core subunit of the mitochondrial membrane respiratory chain NADH dehydrogenase (Complex I) which catalyzes electron transfer from NADH through the respiratory chain, using ubiquinone as an electron acceptor. Essential for the catalytic activity and assembly of complex I. The sequence is that of NADH-ubiquinone oxidoreductase chain 6 (MT-ND6) from Elephas maximus (Indian elephant).